Reading from the N-terminus, the 682-residue chain is Protein asunder (682 aa).

Positions 517-570 form a coiled coil; the sequence is NGARLKLSKAKDQYRLLYRELEQLIHLNATTVHHKNLLESLQSLRAAYGEAKSE. Residues 571–583 show a composition bias toward polar residues; the sequence is PNSSLLRSYTESP. The interval 571 to 612 is disordered; the sequence is PNSSLLRSYTESPHSPERLEPIPSGGSSGSNSNSLLKASKRR. The Nuclear localization signal (NLS) motif lies at 606–612; the sequence is LKASKRR.

The protein belongs to the Integrator subunit 13 family. In terms of assembly, belongs to the multiprotein complex Integrator, at least composed of IntS1, IntS2, IntS3, IntS4, omd/IntS5, IntS6, defl/IntS7, IntS8, IntS9, IntS10, IntS11, IntS12, asun/IntS13, IntS14 and IntS15. The core complex associates with protein phosphatase 2A subunits mts/PP2A and Pp2A-29B, to form the Integrator-PP2A (INTAC) complex. Phosphorylated.

It localises to the nucleus. Its subcellular location is the cytoplasm. It is found in the perinuclear region. In terms of biological role, component of the integrator complex, a multiprotein complex that terminates RNA polymerase II (Pol II) transcription in the promoter-proximal region of genes. The integrator complex provides a quality checkpoint during transcription elongation by driving premature transcription termination of transcripts that are unfavorably configured for transcriptional elongation: the complex terminates transcription by (1) catalyzing dephosphorylation of the C-terminal domain (CTD) of Pol II subunit Polr2A/Rbp1 and Spt5, and (2) degrading the exiting nascent RNA transcript via endonuclease activity. The integrator complex is also involved in the 3'-end processing of the U7 snRNA, and also the spliceosomal snRNAs U1, U2, U4 and U5. The sequence is that of Protein asunder (asun) from Drosophila ananassae (Fruit fly).